Consider the following 492-residue polypeptide: Catalase-1 (492 aa).

Active-site residues include His65 and Asn138. Position 348 (Tyr348) interacts with heme.

The protein belongs to the catalase family. Homotetramer. It depends on heme as a cofactor.

It localises to the peroxisome. The protein localises to the glyoxysome. The catalysed reaction is 2 H2O2 = O2 + 2 H2O. Occurs in almost all aerobically respiring organisms and serves to protect cells from the toxic effects of hydrogen peroxide. The chain is Catalase-1 (CAT1) from Triticum aestivum (Wheat).